The primary structure comprises 561 residues: Excitatory amino acid transporter 4 (561 aa).

At 1 to 52 the chain is on the cytoplasmic side; sequence MSSHGNSLFLRESGAGGGCLQGLQDSLQQRALRTRLRLQTMTREHVRRFLRR. Serine 2 carries the post-translational modification Phosphoserine. The next 3 helical transmembrane spans lie at 53-73, 96-116, and 130-150; these read NAFILLTVSAVIIGVSLAFAL, MLQMLVLPLIVSSLVTGMASL, and VYYMVTTVIAVFIGILMVTII. N-linked (GlcNAc...) asparagine glycosylation is found at asparagine 213, asparagine 229, and asparagine 236. A run of 3 helical transmembrane segments spans residues 259–282, 292–319, and 341–362; these read SANGINALGLVVFSVAFGLVIGGM, FFDSLNEAIMRLVGIIIWYAPVGILFLI, and LTVIVGLFLHAGGVLPLIYFLV. Residues 368–398 constitute an intramembrane region (discontinuously helical); that stretch reads FPFIGGMLQALITAMGTSSSSATLPITFRCL. 385–387 serves as a coordination point for L-aspartate; it reads SSS. The chain crosses the membrane as a helical span at residues 408–434; sequence ITRFVLPVGATVNMDGTALYEALAAIF. Positions 416, 418, and 420 each coordinate Na(+). L-aspartate is bound by residues threonine 424, 465 to 469, aspartate 498, and asparagine 505; that span reads IPQAG. The segment at residues 448–481 is an intramembrane region (discontinuously helical); sequence ITTISITATAASVGAAGIPQAGLVTMVIVLTSVG. Residues 495–516 form a helical membrane-spanning segment; the sequence is WFLDRLRTMTNVLGDSIGAAVI. Na(+) contacts are provided by asparagine 505 and aspartate 509.

This sequence belongs to the dicarboxylate/amino acid:cation symporter (DAACS) (TC 2.A.23) family. SLC1A6 subfamily. Homotrimer. Brain specific.

It localises to the cell membrane. It carries out the reaction K(+)(in) + L-glutamate(out) + 3 Na(+)(out) + H(+)(out) = K(+)(out) + L-glutamate(in) + 3 Na(+)(in) + H(+)(in). The catalysed reaction is K(+)(in) + L-aspartate(out) + 3 Na(+)(out) + H(+)(out) = K(+)(out) + L-aspartate(in) + 3 Na(+)(in) + H(+)(in). The enzyme catalyses D-aspartate(out) + K(+)(in) + 3 Na(+)(out) + H(+)(out) = D-aspartate(in) + K(+)(out) + 3 Na(+)(in) + H(+)(in). Sodium-dependent, high-affinity amino acid transporter that mediates the uptake of L-glutamate and also L-aspartate and D-aspartate. Functions as a symporter that transports one amino acid molecule together with two or three Na(+) ions and one proton, in parallel with the counter-transport of one K(+) ion. Mediates Cl(-) flux that is not coupled to amino acid transport; this avoids the accumulation of negative charges due to aspartate and Na(+) symport. Plays a redundant role in the rapid removal of released glutamate from the synaptic cleft, which is essential for terminating the postsynaptic action of glutamate. The polypeptide is Excitatory amino acid transporter 4 (Slc1a6) (Mus musculus (Mouse)).